The sequence spans 271 residues: Cytosolic Fe-S cluster assembly factor NUBP2 (271 aa).

Residue Met1 is modified to N-acetylmethionine. ATP is bound at residue 22-29; it reads GKGGVGKS. Positions 196 and 199 each coordinate [4Fe-4S] cluster.

The protein belongs to the Mrp/NBP35 ATP-binding proteins family. NUBP2/CFD1 subfamily. As to quaternary structure, heterotetramer of 2 NUBP1 and 2 NUBP2 chains. Interacts with KIFC1. Interacts with NUBP1. It depends on [4Fe-4S] cluster as a cofactor. Widely expressed with highest expression in skeletal muscle.

Its subcellular location is the nucleus. The protein localises to the cytoplasm. It localises to the cytoskeleton. It is found in the microtubule organizing center. The protein resides in the centrosome. Its subcellular location is the cilium axoneme. The protein localises to the centriole. Component of the cytosolic iron-sulfur (Fe/S) protein assembly (CIA) machinery. Required for maturation of extramitochondrial Fe-S proteins. The NUBP1-NUBP2 heterotetramer forms a Fe-S scaffold complex, mediating the de novo assembly of an Fe-S cluster and its transfer to target apoproteins. Negatively regulates cilium formation and structure. The protein is Cytosolic Fe-S cluster assembly factor NUBP2 of Homo sapiens (Human).